The chain runs to 370 residues: Maturase K (370 aa).

The protein belongs to the intron maturase 2 family. MatK subfamily.

The protein resides in the plastid. It is found in the chloroplast. Functionally, usually encoded in the trnK tRNA gene intron. Probably assists in splicing its own and other chloroplast group II introns. The sequence is that of Maturase K from Marchantia polymorpha (Common liverwort).